A 429-amino-acid polypeptide reads, in one-letter code: MIRVIQPPLIASKQLFRRYLATGGTFTNKTSQLDRATLTIKDGPVFSGYSFGANKNISGEAVFTTSLVGYPESMTDPSYKGQILCFTQPLIGNYGVPSSTLKDEFNLLKHMESPSVQCIGIVVADVALEYSHWTAVESLQQWCQRSGVAAISGVDTRQLVSYLREKGSSLAKITIGEEYDADEDAAFEDPGSVNLVHKVSTKAPFHISCPEKYAKGLHIAVLDCGAKENILRCLVERGASLTVFPYNYPIDKIANKFDGIFISNGPGDPTHCSSTTENLAKTMEKYHDLPIFGICLGHQLLALASGARTIKMKYGNRAHNIPALDLTTGKCHITSQNHGYSVDAETLDSDWEPYFTNLNDLSNEGMKHKSRPIFSTQFHPEAKGGPLDTAFLFDKFFENIEQYRATNGLNLGNVDDSLLVDILPKGRVL.

The transit peptide at 1-20 (MIRVIQPPLIASKQLFRRYL) directs the protein to the mitochondrion. In terms of domain architecture, Glutamine amidotransferase type-1 spans 218–406 (HIAVLDCGAK…FENIEQYRAT (189 aa)). The Nucleophile role is filled by cysteine 295. Residues histidine 379 and glutamate 381 contribute to the active site.

It belongs to the CarA family. In terms of assembly, heterodimer composed of 2 chains; the small (or glutamine) chain promotes the hydrolysis of glutamine to ammonia, which is used by the large (or ammonia) chain to synthesize carbamoyl phosphate.

It is found in the mitochondrion matrix. The enzyme catalyses hydrogencarbonate + L-glutamine + 2 ATP + H2O = carbamoyl phosphate + L-glutamate + 2 ADP + phosphate + 2 H(+). The catalysed reaction is L-glutamine + H2O = L-glutamate + NH4(+). Its pathway is amino-acid biosynthesis; L-arginine biosynthesis; carbamoyl phosphate from bicarbonate: step 1/1. Small subunit of the arginine-specific carbamoyl phosphate synthase (CPSase). CPSase catalyzes the formation of carbamoyl phosphate from the ammonia moiety of glutamine, carbonate, and phosphate donated by ATP, the first step of the arginine biosynthetic pathway. The small subunit (glutamine amidotransferase) binds and cleaves glutamine to supply the large subunit with the substrate ammonia. This chain is Carbamoyl phosphate synthase arginine-specific small chain (CPA1), found in Debaryomyces hansenii (strain ATCC 36239 / CBS 767 / BCRC 21394 / JCM 1990 / NBRC 0083 / IGC 2968) (Yeast).